Consider the following 28-residue polypeptide: YDKVEFHITGXTKDTYSAFIQSLRTHLS.

It belongs to the ribosome-inactivating protein family. As to quaternary structure, disulfide-linked heterodimer of A and B chains.

The catalysed reaction is Endohydrolysis of the N-glycosidic bond at one specific adenosine on the 28S rRNA.. Its function is as follows. Gal / GalNAc-specific lectin. Agglutinates both native and trypsin-treated rabbit erythrocytes but not human erythrocytes irrespective of blood group type. The protein is N-acetyl-D-galactosamine-binding lectin subunit A of Iris hollandica (Dutch iris).